A 358-amino-acid polypeptide reads, in one-letter code: Aromatic amino acid aminotransferase (358 aa).

The residue at position 222 (Lys-222) is an N6-(pyridoxal phosphate)lysine.

The protein belongs to the class-II pyridoxal-phosphate-dependent aminotransferase family. As to quaternary structure, homodimer. The cofactor is pyridoxal 5'-phosphate.

The enzyme catalyses an aromatic L-alpha-amino acid + 2-oxoglutarate = an aromatic oxo-acid + L-glutamate. Aminotransferase that catalyzes the conversion of aromatic amino acids and 2-oxoglutarate into corresponding aromatic oxo acids and L-glutamate. This is Aromatic amino acid aminotransferase from Mycobacterium sp. (strain JLS).